The sequence spans 540 residues: Glucose-6-phosphate isomerase (540 aa).

Glu350 functions as the Proton donor in the catalytic mechanism. Residues His381 and Lys503 contribute to the active site.

This sequence belongs to the GPI family.

The protein resides in the cytoplasm. The enzyme catalyses alpha-D-glucose 6-phosphate = beta-D-fructose 6-phosphate. The protein operates within carbohydrate biosynthesis; gluconeogenesis. It participates in carbohydrate degradation; glycolysis; D-glyceraldehyde 3-phosphate and glycerone phosphate from D-glucose: step 2/4. In terms of biological role, catalyzes the reversible isomerization of glucose-6-phosphate to fructose-6-phosphate. The protein is Glucose-6-phosphate isomerase of Paraburkholderia phytofirmans (strain DSM 17436 / LMG 22146 / PsJN) (Burkholderia phytofirmans).